Here is a 391-residue protein sequence, read N- to C-terminus: Origin recognition complex subunit 2 (391 aa).

The interval 1-43 (MEEYTDSGEDKNVYSDDDNDYFTASTQNNRTSKNTDSSPLDPK) is disordered. Positions 22-38 (FTASTQNNRTSKNTDSS) are enriched in polar residues.

The protein belongs to the ORC2 family. ORC is composed of six subunits.

It is found in the nucleus. Functionally, component of the origin recognition complex (ORC) that binds origins of replication. DNA-binding is ATP-dependent, however specific DNA sequences that define origins of replication have not been identified so far. ORC is required to assemble the pre-replication complex necessary to initiate DNA replication. This is Origin recognition complex subunit 2 (orcB) from Dictyostelium discoideum (Social amoeba).